The following is a 302-amino-acid chain: Light-independent protochlorophyllide reductase iron-sulfur ATP-binding protein (302 aa).

ATP-binding positions include 46 to 51 (GIGKST) and K75. S50 provides a ligand contact to Mg(2+). The [4Fe-4S] cluster site is built by C131 and C165. Residue 216–217 (NR) coordinates ATP.

It belongs to the NifH/BchL/ChlL family. In terms of assembly, homodimer. Protochlorophyllide reductase is composed of three subunits; BchL, BchN and BchB. It depends on [4Fe-4S] cluster as a cofactor.

The catalysed reaction is chlorophyllide a + oxidized 2[4Fe-4S]-[ferredoxin] + 2 ADP + 2 phosphate = protochlorophyllide a + reduced 2[4Fe-4S]-[ferredoxin] + 2 ATP + 2 H2O. Its pathway is porphyrin-containing compound metabolism; bacteriochlorophyll biosynthesis (light-independent). Functionally, component of the dark-operative protochlorophyllide reductase (DPOR) that uses Mg-ATP and reduced ferredoxin to reduce ring D of protochlorophyllide (Pchlide) to form chlorophyllide a (Chlide). This reaction is light-independent. The L component serves as a unique electron donor to the NB-component of the complex, and binds Mg-ATP. This chain is Light-independent protochlorophyllide reductase iron-sulfur ATP-binding protein, found in Methylocella silvestris (strain DSM 15510 / CIP 108128 / LMG 27833 / NCIMB 13906 / BL2).